Reading from the N-terminus, the 903-residue chain is MSEEMVPGSQFKSLVEQDMQDCYLRYSMSVIVARALPDARDGFKPVHRRVMYSMHKLGVVPNKGTVKSARIVGDVIGKYHPHGDVAVYDTLARMAQDFSLRYPLVFGQGNFGSIDGDSPAAMRYTEAKMNNLGALMLEDLEKETVDMGPNYDESLEEPLVLPSALPNMIVNGTSGIAVGMATNMAPHNLREVGAAIHALAENPDLTGEDLMEYVKGPDFPTGAIVCGRSGIREAYLTGHGRVRVRARTEIETDAKGKPRIIVTEIPYMVNKAELCKKIADLVRDKRIDGITDIRDESSRDIRIVIELRRDAVGEVVLNNLFKYTQLQTTFSIYNLALVNNLPKLLTLKDLLQVYIDHRLDVITRATQFDLKKAAARLHIIEGLRIATQNIDEVVKIIRQSKTTEIAKQSLQDRFSLDEIQSQAIVDMRLAQLVGLNIEKLEAEYNELIATVADLKDILEKRERRVAIMLQKLDAVVDKYGDERRTTIGEAIDDSDDEDLIAEEEQVITLSKEGYIRRLPIDTFKAQNRGGKGIIGAGLKDEDNVEQIFTASTHSYLLVFTNKGRVYWTKVYRLPEGARNGKGRPIVNFVALTEGEKVQAIVPVRKFGGYFCLVFATKKGIINKMDLTLFSRPRKAGVNAISLDEDDELVKVQLVGMSAEEYEASKNASDDDSAEAVENAAEAQAAEAAIAEESESGDAEDFANRPIPKDLLMIATKNGQAVTFPISCFRAMGRGTHGVKGITLAEGDEVISLLWLKAGNKILTITEKGYGKRSEPGSYRVTRRGSKGVRNLNVTDKIGAAVFVESVADDYDLIITSKDGQVIRIKAADIRLTGRNAQGVKAITLRDGDVVKDATALPSVEDIEQDSADAKETFDKVKGVEVDDDSVVKDDAEKQEIGPTETEE.

Residues 36 to 499 (LPDARDGFKP…AIDDSDDEDL (464 aa)) form the Topo IIA-type catalytic domain. Tyrosine 124 (O-(5'-phospho-DNA)-tyrosine intermediate) is an active-site residue. Residues 526–532 (QNRGGKG) carry the GyrA-box motif. Basic and acidic residues predominate over residues 881-895 (VDDDSVVKDDAEKQE). The interval 881 to 903 (VDDDSVVKDDAEKQEIGPTETEE) is disordered.

This sequence belongs to the type II topoisomerase GyrA/ParC subunit family. As to quaternary structure, heterotetramer, composed of two GyrA and two GyrB chains. In the heterotetramer, GyrA contains the active site tyrosine that forms a transient covalent intermediate with DNA, while GyrB binds cofactors and catalyzes ATP hydrolysis.

It is found in the cytoplasm. The enzyme catalyses ATP-dependent breakage, passage and rejoining of double-stranded DNA.. In terms of biological role, a type II topoisomerase that negatively supercoils closed circular double-stranded (ds) DNA in an ATP-dependent manner to modulate DNA topology and maintain chromosomes in an underwound state. Negative supercoiling favors strand separation, and DNA replication, transcription, recombination and repair, all of which involve strand separation. Also able to catalyze the interconversion of other topological isomers of dsDNA rings, including catenanes and knotted rings. Type II topoisomerases break and join 2 DNA strands simultaneously in an ATP-dependent manner. The sequence is that of DNA gyrase subunit A from Fibrobacter succinogenes (strain ATCC 19169 / S85).